An 87-amino-acid chain; its full sequence is Putative regulatory protein BH2513 (87 aa).

This sequence belongs to the RemA family.

In Halalkalibacterium halodurans (strain ATCC BAA-125 / DSM 18197 / FERM 7344 / JCM 9153 / C-125) (Bacillus halodurans), this protein is Putative regulatory protein BH2513.